The primary structure comprises 200 residues: Transcription elongation factor A protein-like 5 (200 aa).

Basic and acidic residues-rich tracts occupy residues 1–49 (MEKF…KLEV), 61–85 (GEGK…KPDS), 94–106 (RAAE…DYVP), 114–153 (DRGT…EELR), and 190–200 (GQKDLEDAPFV). The disordered stretch occupies residues 1–200 (MEKFYKENEG…QKDLEDAPFV (200 aa)).

It belongs to the TFS-II family. TFA subfamily.

The protein resides in the nucleus. In terms of biological role, may be involved in transcriptional regulation. This Mus musculus (Mouse) protein is Transcription elongation factor A protein-like 5 (Tceal5).